Consider the following 566-residue polypeptide: Berberine bridge enzyme-like D-2 (566 aa).

The first 33 residues, Met-1–Ala-33, serve as a signal peptide directing secretion. An intrachain disulfide couples Cys-42 to Cys-103. Asn-50 carries N-linked (GlcNAc...) asparagine glycosylation. Positions Ser-81–Val-257 constitute an FAD-binding PCMH-type domain. His-118 carries the post-translational modification Pros-8alpha-FAD histidine. Residues Asn-364, Asn-378, and Asn-503 are each glycosylated (N-linked (GlcNAc...) asparagine).

The protein belongs to the oxygen-dependent FAD-linked oxidoreductase family. FAD is required as a cofactor.

It localises to the vacuole. It functions in the pathway alkaloid biosynthesis; nicotine biosynthesis. Involved in the biosynthesis of pyridine alkaloid natural products, leading mainly to the production of anabasine, anatabine, nicotine and nornicotine, effective deterrents against herbivores with antiparasitic and pesticide properties (neurotoxins); nornicotine serves as the precursor in the synthesis of the carcinogen compound N'-nitrosonornicotine (NNN). Catalyzes a late oxidation step subsequent to the pyridine ring condensation reaction in the biosynthesis of alkaloids. The polypeptide is Berberine bridge enzyme-like D-2 (Nicotiana tabacum (Common tobacco)).